The chain runs to 143 residues: MAKKIQAYIKLQVKAGQANPSPPVGPALGQHGVNIMEFCKAFNARTQGQEPGLPTPVIITVYSDRSFTFETKSTPAAVLLKKAAGITSGSARPNTQKVGTVTRAQLEEIAKAKQADLTAAEMEAAVRTIAGSARSMGLNVEGV.

Belongs to the universal ribosomal protein uL11 family. Part of the ribosomal stalk of the 50S ribosomal subunit. Interacts with L10 and the large rRNA to form the base of the stalk. L10 forms an elongated spine to which L12 dimers bind in a sequential fashion forming a multimeric L10(L12)X complex. One or more lysine residues are methylated.

Forms part of the ribosomal stalk which helps the ribosome interact with GTP-bound translation factors. This Stutzerimonas stutzeri (strain A1501) (Pseudomonas stutzeri) protein is Large ribosomal subunit protein uL11.